Reading from the N-terminus, the 168-residue chain is uncharacterized protein (168 aa).

Positions 1–21 form a signal peptide, or 19; the sequence is MKLLKALAVLSLATISSHSFA.

This is an uncharacterized protein from Haemophilus influenzae (strain ATCC 51907 / DSM 11121 / KW20 / Rd).